The sequence spans 73 residues: Disintegrin molossin (73 aa).

A Disintegrin domain is found at 1-73; the sequence is EAGIECDCGS…ADCPRNRFHA (73 aa). Intrachain disulfides connect C6-C21, C8-C16, C15-C38, C29-C35, C34-C59, and C47-C66. Residues 51–53 carry the Cell attachment site motif; it reads RGD.

The protein belongs to the venom metalloproteinase (M12B) family. P-II subfamily. P-IIa sub-subfamily. Monomer (disintegrin). As to expression, expressed by the venom gland.

The protein resides in the secreted. Functionally, inhibits fibrinogen interaction with platelets. Acts by binding to alpha-IIb/beta-3 (ITGA2B/ITGB3) on the platelet surface and inhibits aggregation induced by ADP, thrombin, platelet-activating factor and collagen. This Crotalus molossus molossus (Northern black-tailed rattlesnake) protein is Disintegrin molossin.